We begin with the raw amino-acid sequence, 97 residues long: DNA/RNA-binding protein Alba 1 (97 aa).

Ser2 bears the N-acetylserine; by ard1 acetylase mark. RNA contacts are provided by Lys16, Lys17, and Tyr22. Residue Lys16 is modified to N6,N6,N6-trimethyllysine; alternate. Lys16 carries the post-translational modification N6,N6-dimethyllysine; alternate. Lys16 carries the N6-acetyllysine; alternate modification. Lys16 carries the N6-methyllysine; alternate modification. Position 31 is a deamidated asparagine; partial (Asn31). Gln32 carries the post-translational modification Deamidated glutamine; partial. At Lys40 the chain carries N6-methyllysine; partial. Arg42 and Arg44 together coordinate RNA. At Lys48 the chain carries N6-acetyllysine; partial. Asp51 bears the Aspartate methyl ester; partial mark. Residue Asn58 is modified to Deamidated asparagine; partial. Lys64 carries the post-translational modification N6-acetyllysine; alternate; partial. N6-methyllysine; alternate; partial is present on Lys64. Lys68 carries the N6-acetyllysine; partial modification. An N5-methylglutamine; partial modification is found at Gln75. Residue Asp81 is modified to Aspartate methyl ester; partial. Lys97 bears the N6-methyllysine; partial mark.

This sequence belongs to the histone-like Alba family. In terms of assembly, forms homodimers and higher order oligomers, e.g. homotetramers. Acetylated. Acetylation at Lys-16 by the Pat acetylase decreases DNA-binding affinity. Deacetylation at Lys-16 by the CobB deacetylase increases DNA-binding affinity. Acetylation at Ser-2 is involved in the regulation of the turnover of the protein.

The protein resides in the cytoplasm. The protein localises to the chromosome. Binds double-stranded DNA tightly but without sequence specificity. Involved in DNA compaction. Possesses DNA endonuclease activity. Prevents transcription after DNA binding. Binds single-stranded DNA and RNA in vitro. Binds rRNA and mRNA in vivo. May play a role in maintaining the structural and functional stability of RNA, and, perhaps, ribosomes. Binds double-stranded RNA (dsRNA) and exhibits RNA chaperone activity. Required for normal growth. The sequence is that of DNA/RNA-binding protein Alba 1 from Saccharolobus islandicus (strain REY15A) (Sulfolobus islandicus).